The chain runs to 536 residues: Glyco-Gag protein (536 aa).

Over 1–54 (MSGASSGTATGARLFGISSVLGEYRVLIGDEGAGPSRSPSEVSFSVWYRSRAAR) the chain is Cytoplasmic. A helical membrane pass occupies residues 55–75 (LVILCLVASFLVPCLTFLIAE). Topologically, residues 76-536 (TVMGQTVTTP…TQNRNKDREE (461 aa)) are extracellular. A glycan (N-linked (GlcNAc...) asparagine; by host) is linked at Asn-137. 2 disordered regions span residues 174-284 (VRPF…NNRP) and 494-536 (ETPE…DREE). Over residues 177-198 (FLPPPKPPTPLPQPLSPQPSAP) the composition is skewed to pro residues. Residues 199–209 (PTSSLYPVLPK) are compositionally biased toward low complexity. Pro residues-rich tracts occupy residues 210 to 223 (TNPP…PDPS) and 233 to 246 (EPPP…PPPS). Residues 494–511 (ETPEEREERLWQRQEERD) show a composition bias toward basic and acidic residues.

Post-translationally, glycosylated by host. In terms of processing, cleaved by host near the middle of the molecule, releasing the c-terminal half containing capsid and nucleoprotein domains op GAG.

It is found in the host cell membrane. Plays a role in viral particle release. Presumably acts by facilitating the fission of the virion bud at the cell surface. The chain is Glyco-Gag protein from Feline sarcoma virus (strain McDonough).